A 930-amino-acid polypeptide reads, in one-letter code: MHVKAETVLALLTPGLPSVVGQHVVDLSGDGWTLSSTALDRTVPGHLPSQVHLDLFEAGVINITASMILTFVGLLMPIGRIPATRLKACDLENFESTWLVFDGLDTFTTITFCDQHVGSTDNQFRQYHFDVSQILKECKQDPVIRINFGSAPSIANAIAKSPDAEEWPPGVQITNEYPNRWYIRKEQSDFGWDWGPAFAPVGPWKPSYIVQNNHAELYVLNTDLDFYRQGQINYLPPDQSQPWIVNASIDILGPVPWKPSMSIEIKDAATGSVLSSGLLQNVTVSGNSITGTTTIDGDAPKLWWPSGMGEQNLYNVTVTVQNDKKKSLAKVTKRTGFRTIFLNQRNITDDQLAQGIAPGANWHFEINGHAFYAKGSNIIPPDAFWPRVTQARMARLFDAVTAGNQNMLRVWASGAYLHDFIYDLADEKGILLWSEFQFSDALYPVNDAFLENVAAEVVYNVRRVNHHPSLALWAGGNEIESLMLPMVKRADPTGYSKYVGEYEKLYISLILPLVYENTRSITYSPSSTTEGYLYVNLSAPVPMAERYSNTTPGSYYGDTDYYNYDTSVSFDYNHYPVGRFANEFGFHSMPSLQTWQQAVDPEDLHFNSSVVMLRNHHYTAGGLFTDNFKNSSKGMGEMTMGVEAYYPIPSKSDSVANFSAWCHATQLFQADMYKSQIQFYRRGSGMPERQLGSLYWQLEDIWQAPTWAGIEYDGRWKVLHYVARDIYQPIIVSPFWNYTTGRLEVYVTSDLWEPAQGTVNLTWVDLSGKTIANNAGTPETVNFTVGALNTTNIYTTNISELSLPDLKDSILILSLSGEGRLPNTSSKKAFVHQNHFTPVFPKDLSLKDPKLEISYSPESRKFTVQATGGVSLYTWLDYPAGAVGYFEENAFVLLPGVQKEVSFAAQEGNVTDDWVRRVTVQSLWDQKVRD.

A signal peptide spans 1–21 (MHVKAETVLALLTPGLPSVVG). N-linked (GlcNAc...) asparagine glycosylation is found at N62, N246, N281, N315, and N346. E478 acts as the Proton donor in catalysis. N536, N607, N630, N657, N737, N760, N782, N789, N797, N823, and N909 each carry an N-linked (GlcNAc...) asparagine glycan.

Belongs to the glycosyl hydrolase 2 family. Beta-mannosidase A subfamily. As to quaternary structure, homodimer.

It localises to the secreted. The enzyme catalyses Hydrolysis of terminal, non-reducing beta-D-mannose residues in beta-D-mannosides.. It participates in glycan metabolism; N-glycan degradation. Its function is as follows. Exoglycosidase that cleaves the single beta-linked mannose residue from the non-reducing end of beta-mannosidic oligosaccharides of various complexity and length. Involved in the degradation of polymeric mannan and galactomannan. In Neosartorya fischeri (strain ATCC 1020 / DSM 3700 / CBS 544.65 / FGSC A1164 / JCM 1740 / NRRL 181 / WB 181) (Aspergillus fischerianus), this protein is Beta-mannosidase A (mndA).